The primary structure comprises 2885 residues: E3 ubiquitin-protein ligase hyd (2885 aa).

A disordered region spans residues 83–138 (SDAKCSTSGGSGTASASKAPSSSRPMARSRARLLRATGRSNSTGQGSGSRSTGVII). Low complexity-rich tracts occupy residues 95–108 (TASA…SRPM) and 116–138 (LRAT…GVII). In terms of domain architecture, UBA spans 154–196 (YVPEELISQAEVVLQGKSRNLIIRELQRTNLDVNLAVNNLLSR). Low complexity predominate over residues 266–276 (ANANAADSNQS). Disordered stretches follow at residues 266–291 (ANAN…TGNS), 580–664 (NNLN…GRKD), and 711–731 (AATS…KEDD). Polar residues-rich tracts occupy residues 277–291 (TTRS…TGNS) and 598–615 (AMPS…SNSK). A phosphoserine mark is found at Ser-628 and Ser-631. Over residues 650–664 (TTKEDSNAPQEGRKD) the composition is skewed to basic and acidic residues. The span at 711–722 (AATSSTSNTAST) shows a compositional bias: low complexity. Position 967 is a phosphoserine (Ser-967). Over residues 1008 to 1032 (ASSSNENSSFATMSSSAAGSASSTS) the composition is skewed to low complexity. Residues 1008–1035 (ASSSNENSSFATMSSSAAGSASSTSRDN) are disordered. The segment at 1217 to 1285 (DTCSFTWTGA…EKCKCKALIA (69 aa)) adopts a UBR-type zinc-finger fold. Ser-1362 carries the phosphoserine modification. Residues 1642 to 1761 (NEDGMQDDES…IRSRDTARSS (120 aa)) form a disordered region. Over residues 1669-1681 (NQSNQEVQRSVQA) the composition is skewed to polar residues. Positions 1696–1721 (LEDESGDSSAQEEDGSEDGESDDQSD) are enriched in acidic residues. Positions 1735–1749 (TNSNARSDLAPQTMQ) are enriched in polar residues. At Ser-2037 the chain carries Phosphoserine. The interval 2124–2143 (IDSSKTGDGNVTNKAEGSTD) is disordered. Phosphoserine is present on Ser-2183. The tract at residues 2473 to 2492 (NLDARPYTPPNSSDNATPES) is disordered. Polar residues predominate over residues 2482-2492 (PNSSDNATPES). In terms of domain architecture, PABC spans 2484–2561 (SSDNATPESL…AIEIITFKQK (78 aa)). Ser-2574 carries the phosphoserine modification. Residues 2782–2885 (FNDESSEGPD…AIKSKNFGFV (104 aa)) enclose the HECT domain. The active-site Glycyl thioester intermediate is the Cys-2854.

The protein belongs to the UBR5 family.

The protein localises to the nucleus. The protein resides in the cytoplasm. The enzyme catalyses S-ubiquitinyl-[E2 ubiquitin-conjugating enzyme]-L-cysteine + [acceptor protein]-L-lysine = [E2 ubiquitin-conjugating enzyme]-L-cysteine + N(6)-ubiquitinyl-[acceptor protein]-L-lysine.. It participates in protein modification; protein ubiquitination. Functionally, E3 ubiquitin-protein ligase which accepts ubiquitin from an E2 ubiquitin-conjugating enzyme in the form of a thioester and then directly transfers the ubiquitin to targeted substrate. Required for regulation of cell proliferation in imaginal disks and germ cells. Acts as a negative regulator of hh, ci and dpp expression in the anterior of the eye disk. Acts as a positive regulator of the canonical Wnt signaling pathway by mediating ubiquitination and degradation of gro. Catalyzes 'Lys-63'-linked polyubiquitination of akirin, thereby activating the immune deficiency pathway (Imd). The polypeptide is E3 ubiquitin-protein ligase hyd (hyd) (Drosophila melanogaster (Fruit fly)).